Here is a 338-residue protein sequence, read N- to C-terminus: Ketol-acid reductoisomerase (NADP(+)) (338 aa).

Positions 1-181 (MKVFYDKDCD…GGGRAGIIET (181 aa)) constitute a KARI N-terminal Rossmann domain. NADP(+)-binding positions include 24–27 (YGSQ), R47, and S52. Residue H107 is part of the active site. An NADP(+)-binding site is contributed by G133. The KARI C-terminal knotted domain maps to 182–327 (NFREETETDL…GKLRAMMPWI (146 aa)). Mg(2+) contacts are provided by D190, E194, E226, and E230. Residue S251 participates in substrate binding.

Belongs to the ketol-acid reductoisomerase family. Mg(2+) is required as a cofactor.

It carries out the reaction (2R)-2,3-dihydroxy-3-methylbutanoate + NADP(+) = (2S)-2-acetolactate + NADPH + H(+). The enzyme catalyses (2R,3R)-2,3-dihydroxy-3-methylpentanoate + NADP(+) = (S)-2-ethyl-2-hydroxy-3-oxobutanoate + NADPH + H(+). It functions in the pathway amino-acid biosynthesis; L-isoleucine biosynthesis; L-isoleucine from 2-oxobutanoate: step 2/4. The protein operates within amino-acid biosynthesis; L-valine biosynthesis; L-valine from pyruvate: step 2/4. Functionally, involved in the biosynthesis of branched-chain amino acids (BCAA). Catalyzes an alkyl-migration followed by a ketol-acid reduction of (S)-2-acetolactate (S2AL) to yield (R)-2,3-dihydroxy-isovalerate. In the isomerase reaction, S2AL is rearranged via a Mg-dependent methyl migration to produce 3-hydroxy-3-methyl-2-ketobutyrate (HMKB). In the reductase reaction, this 2-ketoacid undergoes a metal-dependent reduction by NADPH to yield (R)-2,3-dihydroxy-isovalerate. The polypeptide is Ketol-acid reductoisomerase (NADP(+)) (Bordetella bronchiseptica (strain ATCC BAA-588 / NCTC 13252 / RB50) (Alcaligenes bronchisepticus)).